The following is a 122-amino-acid chain: Large ribosomal subunit protein uL14 (122 aa).

This sequence belongs to the universal ribosomal protein uL14 family. In terms of assembly, part of the 50S ribosomal subunit. Forms a cluster with proteins L3 and L19. In the 70S ribosome, L14 and L19 interact and together make contacts with the 16S rRNA in bridges B5 and B8.

In terms of biological role, binds to 23S rRNA. Forms part of two intersubunit bridges in the 70S ribosome. The protein is Large ribosomal subunit protein uL14 of Borreliella burgdorferi (strain ATCC 35210 / DSM 4680 / CIP 102532 / B31) (Borrelia burgdorferi).